A 508-amino-acid chain; its full sequence is Inosine-5'-monophosphate dehydrogenase (508 aa).

CBS domains are found at residues 111–170 and 174–230; these read FITD…EITL and MTTN…PDAS. NAD(+) contacts are provided by residues Asp267 and 317–319; that span reads GMG. 2 residues coordinate K(+): Gly319 and Gly321. Ser322 provides a ligand contact to IMP. Cys324 serves as a coordination point for K(+). Cys324 functions as the Thioimidate intermediate in the catalytic mechanism. IMP is bound by residues 357–359, 380–381, and 404–408; these read DGG, GF, and YRGMA. The active-site Proton acceptor is Arg420. Gln432 is an IMP binding site. Residue Gly492 participates in K(+) binding.

The protein belongs to the IMPDH/GMPR family. Homotetramer. It depends on K(+) as a cofactor.

It catalyses the reaction IMP + NAD(+) + H2O = XMP + NADH + H(+). Its pathway is purine metabolism; XMP biosynthesis via de novo pathway; XMP from IMP: step 1/1. With respect to regulation, mycophenolic acid (MPA) is a non-competitive inhibitor that prevents formation of the closed enzyme conformation by binding to the same site as the amobile flap. In contrast, mizoribine monophosphate (MZP) is a competitive inhibitor that induces the closed conformation. MPA is a potent inhibitor of mammalian IMPDHs but a poor inhibitor of the bacterial enzymes. MZP is a more potent inhibitor of bacterial IMPDH. Functionally, catalyzes the conversion of inosine 5'-phosphate (IMP) to xanthosine 5'-phosphate (XMP), the first committed and rate-limiting step in the de novo synthesis of guanine nucleotides, and therefore plays an important role in the regulation of cell growth. This Leptospira interrogans serogroup Icterohaemorrhagiae serovar Lai (strain 56601) protein is Inosine-5'-monophosphate dehydrogenase.